The following is a 142-amino-acid chain: Hemoglobin subunit alpha-A (142 aa).

A Globin domain is found at 2–142 (VLSGSDKTNV…VGNVLTAKYR (141 aa)). H59 lines the O2 pocket. H88 serves as a coordination point for heme b.

Belongs to the globin family. Heterotetramer of two alpha chains and two beta chains. Red blood cells.

Functionally, involved in oxygen transport from the lung to the various peripheral tissues. In Ara ararauna (Blue-and-yellow macaw), this protein is Hemoglobin subunit alpha-A (HBAA).